Here is a 513-residue protein sequence, read N- to C-terminus: Glutamate--tRNA ligase 2 (513 aa).

Positions 11–21 (PSPSGFLHIGS) match the 'HIGH' region motif. The short motif at 240–244 (KLSKR) is the 'KMSKS' region element. ATP is bound at residue Lys-243.

It belongs to the class-I aminoacyl-tRNA synthetase family. Glutamate--tRNA ligase type 1 subfamily. Monomer.

It is found in the cytoplasm. The catalysed reaction is tRNA(Glu) + L-glutamate + ATP = L-glutamyl-tRNA(Glu) + AMP + diphosphate. Its function is as follows. Catalyzes the attachment of glutamate to tRNA(Glu) in a two-step reaction: glutamate is first activated by ATP to form Glu-AMP and then transferred to the acceptor end of tRNA(Glu). This chain is Glutamate--tRNA ligase 2, found in Rickettsia massiliae (strain Mtu5).